The sequence spans 465 residues: Lipase 10 (465 aa).

A signal peptide spans 1 to 16 (MKTLLIFLAFLSSIFA). A disulfide bridge links Cys-112 with Cys-285. Catalysis depends on Ser-196, which acts as the Charge relay system. Residues Asn-231 and Asn-319 are each glycosylated (N-linked (GlcNAc...) asparagine). Catalysis depends on charge relay system residues Asp-348 and His-381. Cysteines 364 and 409 form a disulfide.

The protein belongs to the AB hydrolase superfamily. Lipase family. Class Lip subfamily.

It localises to the secreted. The enzyme catalyses a triacylglycerol + H2O = a diacylglycerol + a fatty acid + H(+). In terms of biological role, secreted lipase that is able to hydrolyze both the neutral triacylglycerols and the monopalmitate ester Tween 40, allowing the use of hydrolyzed products as carbon sources. Has broad lipolytic activity, which may be important for colonization and subsequent infection, therefore contributing to the persistence and virulence in human tissue. The protein is Lipase 10 of Candida albicans (strain SC5314 / ATCC MYA-2876) (Yeast).